The following is a 162-amino-acid chain: HTH-type transcriptional regulator IscR (162 aa).

Residues 2–131 form the HTH rrf2-type domain; the sequence is RLTSKGRYAV…NNITLGELVN (130 aa). Positions 28 to 51 form a DNA-binding region, H-T-H motif; it reads LADISERQGISLSYLEQLFSRLRK. [2Fe-2S] cluster is bound by residues Cys-92, Cys-98, and Cys-104.

Requires [2Fe-2S] cluster as cofactor.

In terms of biological role, regulates the transcription of several operons and genes involved in the biogenesis of Fe-S clusters and Fe-S-containing proteins. This is HTH-type transcriptional regulator IscR from Shigella sonnei (strain Ss046).